Consider the following 281-residue polypeptide: N-acetylmuramic acid 6-phosphate etherase (281 aa).

One can recognise an SIS domain in the interval 63–226 (IVPRMKQGGR…TTSVMIQLGR (164 aa)). E91 (proton donor) is an active-site residue. The active site involves E122.

This sequence belongs to the GCKR-like family. MurNAc-6-P etherase subfamily. As to quaternary structure, homodimer.

The enzyme catalyses N-acetyl-D-muramate 6-phosphate + H2O = N-acetyl-D-glucosamine 6-phosphate + (R)-lactate. Its pathway is amino-sugar metabolism; N-acetylmuramate degradation. In terms of biological role, specifically catalyzes the cleavage of the D-lactyl ether substituent of MurNAc 6-phosphate, producing GlcNAc 6-phosphate and D-lactate. The sequence is that of N-acetylmuramic acid 6-phosphate etherase from Bacteroides fragilis (strain YCH46).